The sequence spans 402 residues: Endo-polygalacturonase (402 aa).

The N-terminal stretch at 1-23 (MEYQSGKRVLSLSLGLIGLFSAS) is a signal peptide. Catalysis depends on aspartate 249, which acts as the Proton donor. Residue histidine 277 is part of the active site.

This sequence belongs to the glycosyl hydrolase 28 family. In terms of assembly, monomer.

Its subcellular location is the secreted. The catalysed reaction is (1,4-alpha-D-galacturonosyl)n+m + H2O = (1,4-alpha-D-galacturonosyl)n + (1,4-alpha-D-galacturonosyl)m.. Involved in maceration and soft-rotting of plant tissue. The protein is Endo-polygalacturonase (peh) of Pectobacterium carotovorum subsp. carotovorum (Erwinia carotovora subsp. carotovora).